The following is a 209-amino-acid chain: Orotate phosphoribosyltransferase (209 aa).

Residues Arg-96, Lys-100, His-102, and 122–130 (EDLISTGGS) contribute to the 5-phospho-alpha-D-ribose 1-diphosphate site. Position 126 (Ser-126) interacts with orotate.

The protein belongs to the purine/pyrimidine phosphoribosyltransferase family. PyrE subfamily. As to quaternary structure, homodimer. Requires Mg(2+) as cofactor.

The catalysed reaction is orotidine 5'-phosphate + diphosphate = orotate + 5-phospho-alpha-D-ribose 1-diphosphate. Its pathway is pyrimidine metabolism; UMP biosynthesis via de novo pathway; UMP from orotate: step 1/2. In terms of biological role, catalyzes the transfer of a ribosyl phosphate group from 5-phosphoribose 1-diphosphate to orotate, leading to the formation of orotidine monophosphate (OMP). The polypeptide is Orotate phosphoribosyltransferase (Streptococcus sanguinis (strain SK36)).